A 254-amino-acid polypeptide reads, in one-letter code: Leucyl/phenylalanyl-tRNA--protein transferase (254 aa).

Belongs to the L/F-transferase family.

It localises to the cytoplasm. The catalysed reaction is N-terminal L-lysyl-[protein] + L-leucyl-tRNA(Leu) = N-terminal L-leucyl-L-lysyl-[protein] + tRNA(Leu) + H(+). It carries out the reaction N-terminal L-arginyl-[protein] + L-leucyl-tRNA(Leu) = N-terminal L-leucyl-L-arginyl-[protein] + tRNA(Leu) + H(+). The enzyme catalyses L-phenylalanyl-tRNA(Phe) + an N-terminal L-alpha-aminoacyl-[protein] = an N-terminal L-phenylalanyl-L-alpha-aminoacyl-[protein] + tRNA(Phe). Functions in the N-end rule pathway of protein degradation where it conjugates Leu, Phe and, less efficiently, Met from aminoacyl-tRNAs to the N-termini of proteins containing an N-terminal arginine or lysine. The sequence is that of Leucyl/phenylalanyl-tRNA--protein transferase from Burkholderia cenocepacia (strain ATCC BAA-245 / DSM 16553 / LMG 16656 / NCTC 13227 / J2315 / CF5610) (Burkholderia cepacia (strain J2315)).